A 150-amino-acid polypeptide reads, in one-letter code: Snake venom vascular endothelial growth factor toxin barietin (150 aa).

A signal peptide spans 1–24 (MAAYLLAVAILFCIQGWPSGTVQG). The residue at position 25 (Glu-25) is a Pyrrolidone carboxylic acid (Glu). Cystine bridges form between Cys-38–Cys-80, Cys-69–Cys-115, and Cys-73–Cys-117. The segment at 119-150 (PRSGSRVNIGKHKRSPEEGEREPSSPLTPGSL) is disordered. Positions 122–150 (GSRVNIGKHKRSPEEGEREPSSPLTPGSL) are excised as a propeptide.

This sequence belongs to the PDGF/VEGF growth factor family. Snake venom VEGF subfamily. In terms of assembly, homodimer; disulfide-linked. Interacts with high affinity with VEGF receptor-2 (KDR), and with a lower affinity with VEGF receptor-1 (FLT1). Does not bind VEGF receptor-3 (FLT4) and neuropilin-1 (NRP1). In terms of tissue distribution, expressed by the venom gland.

The protein resides in the secreted. Its function is as follows. Snake venom VEGFs that may contribute to venom dispersion and prey subjugation by inducing vascular permeability and hypotension. This protein induces an increase in capillary permeability after intradermal injection, as well as a drastic hypotensive effect after intravenous injection. The hypotension is mediated by nitric oxide (NO), which is produced by VEGF-activated endothelium NO synthase. Also induces angiogenesis in vitro, probably through VEGF receptor (KDR/VEGFR-2) signaling. The sequence is that of Snake venom vascular endothelial growth factor toxin barietin from Bitis arietans (African puff adder).